Here is a 340-residue protein sequence, read N- to C-terminus: Phenylalanine--tRNA ligase alpha subunit (340 aa).

Glu-255 contributes to the Mg(2+) binding site.

It belongs to the class-II aminoacyl-tRNA synthetase family. Phe-tRNA synthetase alpha subunit type 1 subfamily. In terms of assembly, tetramer of two alpha and two beta subunits. The cofactor is Mg(2+).

It is found in the cytoplasm. It catalyses the reaction tRNA(Phe) + L-phenylalanine + ATP = L-phenylalanyl-tRNA(Phe) + AMP + diphosphate + H(+). The protein is Phenylalanine--tRNA ligase alpha subunit of Desulfitobacterium hafniense (strain Y51).